Here is a 108-residue protein sequence, read N- to C-terminus: Ribonuclease P protein component (108 aa).

The protein belongs to the RnpA family. Consists of a catalytic RNA component (M1 or rnpB) and a protein subunit.

The enzyme catalyses Endonucleolytic cleavage of RNA, removing 5'-extranucleotides from tRNA precursor.. Its function is as follows. RNaseP catalyzes the removal of the 5'-leader sequence from pre-tRNA to produce the mature 5'-terminus. It can also cleave other RNA substrates such as 4.5S RNA. The protein component plays an auxiliary but essential role in vivo by binding to the 5'-leader sequence and broadening the substrate specificity of the ribozyme. The sequence is that of Ribonuclease P protein component from Campylobacter jejuni subsp. doylei (strain ATCC BAA-1458 / RM4099 / 269.97).